A 294-amino-acid chain; its full sequence is Glutamate-binding protein GluB (294 aa).

The N-terminal stretch at 1 to 26 is a signal peptide; the sequence is MSHKRMFTRLAAATSAAVLAGITLTA. Cys27 carries N-palmitoyl cysteine lipidation. Cys27 carries the S-diacylglycerol cysteine lipid modification.

This sequence belongs to the bacterial solute-binding protein 3 family. As to quaternary structure, the complex is composed of two ATP-binding proteins (GluA), two transmembrane proteins (GluC and GluD) and a solute-binding protein (GluB).

The protein resides in the cell membrane. In terms of biological role, part of the ABC transporter complex GluABCD involved in glutamate uptake. Binds glutamate with a high affinity. This chain is Glutamate-binding protein GluB, found in Corynebacterium efficiens (strain DSM 44549 / YS-314 / AJ 12310 / JCM 11189 / NBRC 100395).